Here is a 519-residue protein sequence, read N- to C-terminus: Nitrogen fixation regulatory protein (519 aa).

Residues 23–93 enclose the PAS 1 domain; it reads LPEIFRQTVE…QALWGRLAQK (71 aa). A PAC domain is found at 94 to 148; that stretch reads KPWSGVLVNRRKDKTLYLAELTVAPVLNEAGETIYYLGMHRDTSELHELEQRVNN. Residues 151 to 217 form the PAS 2 domain; the sequence is LMIEAVVNAA…FETLENQGSA (67 aa). Residues 302 to 517 form the Histidine kinase domain; the sequence is AAIHRLQGPV…RIVVELPFSA (216 aa). At histidine 305 the chain carries Phosphohistidine; by autocatalysis.

The cofactor is FAD.

The enzyme catalyses ATP + protein L-histidine = ADP + protein N-phospho-L-histidine.. Its function is as follows. Required for the inhibition of NifA activity in response to oxygen and low level of fixed nitrogen. The sequence is that of Nitrogen fixation regulatory protein (nifL) from Azotobacter vinelandii.